Reading from the N-terminus, the 454-residue chain is CCA-adding enzyme (454 aa).

The ATP site is built by S59 and R62. CTP contacts are provided by S59 and R62. D71, D73, and D125 together coordinate Mg(2+). H148, K167, and Y176 together coordinate ATP. Residues H148, K167, and Y176 each coordinate CTP.

Belongs to the tRNA nucleotidyltransferase/poly(A) polymerase family. Archaeal CCA-adding enzyme subfamily. In terms of assembly, homodimer. The cofactor is Mg(2+).

The catalysed reaction is a tRNA precursor + 2 CTP + ATP = a tRNA with a 3' CCA end + 3 diphosphate. It catalyses the reaction a tRNA with a 3' CCA end + 2 CTP + ATP = a tRNA with a 3' CCACCA end + 3 diphosphate. Catalyzes the addition and repair of the essential 3'-terminal CCA sequence in tRNAs without using a nucleic acid template. Adds these three nucleotides in the order of C, C, and A to the tRNA nucleotide-73, using CTP and ATP as substrates and producing inorganic pyrophosphate. tRNA 3'-terminal CCA addition is required both for tRNA processing and repair. Also involved in tRNA surveillance by mediating tandem CCA addition to generate a CCACCA at the 3' terminus of unstable tRNAs. While stable tRNAs receive only 3'-terminal CCA, unstable tRNAs are marked with CCACCA and rapidly degraded. This is CCA-adding enzyme from Methanosarcina acetivorans (strain ATCC 35395 / DSM 2834 / JCM 12185 / C2A).